The chain runs to 217 residues: 3-demethoxyubiquinol 3-hydroxylase (217 aa).

The Fe cation site is built by Glu-66, Glu-96, His-99, Glu-148, Glu-180, and His-183.

It belongs to the COQ7 family. The cofactor is Fe cation.

It is found in the cell membrane. It carries out the reaction a 5-methoxy-2-methyl-3-(all-trans-polyprenyl)benzene-1,4-diol + AH2 + O2 = a 3-demethylubiquinol + A + H2O. It participates in cofactor biosynthesis; ubiquinone biosynthesis. Functionally, catalyzes the hydroxylation of 2-nonaprenyl-3-methyl-6-methoxy-1,4-benzoquinol during ubiquinone biosynthesis. The sequence is that of 3-demethoxyubiquinol 3-hydroxylase from Xanthomonas euvesicatoria pv. vesicatoria (strain 85-10) (Xanthomonas campestris pv. vesicatoria).